A 138-amino-acid chain; its full sequence is Large ribosomal subunit protein uL16 (138 aa).

The span at 1–13 (MLQPARRKFRKEQ) shows a compositional bias: basic residues. Positions 1 to 22 (MLQPARRKFRKEQKGRNTGVAT) are disordered.

Belongs to the universal ribosomal protein uL16 family. Part of the 50S ribosomal subunit.

Binds 23S rRNA and is also seen to make contacts with the A and possibly P site tRNAs. This is Large ribosomal subunit protein uL16 from Acidovorax ebreus (strain TPSY) (Diaphorobacter sp. (strain TPSY)).